Reading from the N-terminus, the 600-residue chain is Putative dehydrogenase XoxF (600 aa).

The N-terminal stretch at 1–21 (MKNLMNGACLALLMSGTAALA) is a signal peptide. 2 residues coordinate Ca(2+): E192 and N276. The Proton acceptor role is filled by D318.

It belongs to the bacterial PQQ dehydrogenase family. The cofactor is pyrroloquinoline quinone. Requires Ca(2+) as cofactor.

The protein is Putative dehydrogenase XoxF (xoxF) of Paracoccus denitrificans.